Reading from the N-terminus, the 194-residue chain is Peptidyl-tRNA hydrolase (194 aa).

Tyr17 is a binding site for tRNA. The Proton acceptor role is filled by His22. 3 residues coordinate tRNA: Tyr69, Asn71, and Asn117.

This sequence belongs to the PTH family. As to quaternary structure, monomer.

Its subcellular location is the cytoplasm. It catalyses the reaction an N-acyl-L-alpha-aminoacyl-tRNA + H2O = an N-acyl-L-amino acid + a tRNA + H(+). Functionally, hydrolyzes ribosome-free peptidyl-tRNAs (with 1 or more amino acids incorporated), which drop off the ribosome during protein synthesis, or as a result of ribosome stalling. Catalyzes the release of premature peptidyl moieties from peptidyl-tRNA molecules trapped in stalled 50S ribosomal subunits, and thus maintains levels of free tRNAs and 50S ribosomes. This chain is Peptidyl-tRNA hydrolase, found in Arthrobacter sp. (strain FB24).